The following is an 892-amino-acid chain: Protein argonaute 11 (892 aa).

Positions 1 to 17 (MSSRGGGVGGRRGGPGG) are enriched in gly residues. Disordered regions lie at residues 1–68 (MSSR…ALQP) and 86–117 (MEAR…GALP). The span at 86-107 (MEAREGASSSSSASAPAVGEVE) shows a compositional bias: low complexity. Positions 248-362 (SLKQFLAGTY…LPMEVCRIVK (115 aa)) constitute a PAZ domain. The 308-residue stretch at 541-848 (LLVIVLPDAN…AASRARHYLE (308 aa)) folds into the Piwi domain. The tract at residues 850–876 (GSLPDHGSSSASAAGGSRRNDRGVPVK) is disordered. A compositionally biased stretch (low complexity) spans 856–866 (GSSSASAAGGS). The span at 867–876 (RRNDRGVPVK) shows a compositional bias: basic and acidic residues.

The protein belongs to the argonaute family. Ago subfamily.

In terms of biological role, probably involved in the RNA silencing pathway. May bind to short RNAs such as microRNAs (miRNAs) or short interfering RNAs (siRNAs), and represses the translation of mRNAs which are complementary to them. The sequence is that of Protein argonaute 11 (AGO11) from Oryza sativa subsp. japonica (Rice).